Reading from the N-terminus, the 180-residue chain is Large ribosomal subunit protein uL5 (180 aa).

Belongs to the universal ribosomal protein uL5 family. In terms of assembly, part of the 50S ribosomal subunit; part of the 5S rRNA/L5/L18/L25 subcomplex. Contacts the 5S rRNA and the P site tRNA. Forms a bridge to the 30S subunit in the 70S ribosome.

In terms of biological role, this is one of the proteins that bind and probably mediate the attachment of the 5S RNA into the large ribosomal subunit, where it forms part of the central protuberance. In the 70S ribosome it contacts protein S13 of the 30S subunit (bridge B1b), connecting the 2 subunits; this bridge is implicated in subunit movement. Contacts the P site tRNA; the 5S rRNA and some of its associated proteins might help stabilize positioning of ribosome-bound tRNAs. This Streptococcus thermophilus (strain CNRZ 1066) protein is Large ribosomal subunit protein uL5.